The sequence spans 213 residues: Adenylyl-sulfate kinase (213 aa).

The span at 1–17 shows a compositional bias: basic and acidic residues; that stretch reads MPAHQLDDHNQETRSDD. Residues 1–20 form a disordered region; the sequence is MPAHQLDDHNQETRSDDENI. 47–54 is a binding site for ATP; it reads GLSGSGKS. Catalysis depends on S121, which acts as the Phosphoserine intermediate.

Belongs to the APS kinase family.

It carries out the reaction adenosine 5'-phosphosulfate + ATP = 3'-phosphoadenylyl sulfate + ADP + H(+). The protein operates within sulfur metabolism; hydrogen sulfide biosynthesis; sulfite from sulfate: step 2/3. Functionally, catalyzes the synthesis of activated sulfate. This is Adenylyl-sulfate kinase from Yersinia pestis.